Reading from the N-terminus, the 76-residue chain is Putative snRNP Sm-like protein (76 aa).

One can recognise a Sm domain in the interval 4 to 76 (RPLDVIHKSL…VLAISPVEIE (73 aa)).

It belongs to the snRNP Sm proteins family.

This chain is Putative snRNP Sm-like protein, found in Thermococcus sibiricus (strain DSM 12597 / MM 739).